The primary structure comprises 142 residues: Transcriptional regulator MraZ (142 aa).

SpoVT-AbrB domains follow at residues 5–47 (EYPY…PLAS) and 76–119 (ANKA…NPER).

This sequence belongs to the MraZ family. As to quaternary structure, forms oligomers.

It is found in the cytoplasm. It localises to the nucleoid. The sequence is that of Transcriptional regulator MraZ from Deinococcus geothermalis (strain DSM 11300 / CIP 105573 / AG-3a).